The primary structure comprises 561 residues: Arginine--tRNA ligase (561 aa).

The 'HIGH' region signature appears at 128–138 (ANPTGPLHVGH).

This sequence belongs to the class-I aminoacyl-tRNA synthetase family. In terms of assembly, monomer.

The protein resides in the cytoplasm. It carries out the reaction tRNA(Arg) + L-arginine + ATP = L-arginyl-tRNA(Arg) + AMP + diphosphate. The sequence is that of Arginine--tRNA ligase from Leptothrix cholodnii (strain ATCC 51168 / LMG 8142 / SP-6) (Leptothrix discophora (strain SP-6)).